A 354-amino-acid polypeptide reads, in one-letter code: 3-dehydroquinate synthase (354 aa).

NAD(+) is bound by residues 66 to 71, 100 to 104, 124 to 125, K136, K145, and 163 to 166; these read SGETSK, GATGD, TT, and FLET. Zn(2+) contacts are provided by E178, H242, and H256.

Belongs to the sugar phosphate cyclases superfamily. Dehydroquinate synthase family. NAD(+) serves as cofactor. Requires Co(2+) as cofactor. The cofactor is Zn(2+).

Its subcellular location is the cytoplasm. The catalysed reaction is 7-phospho-2-dehydro-3-deoxy-D-arabino-heptonate = 3-dehydroquinate + phosphate. It functions in the pathway metabolic intermediate biosynthesis; chorismate biosynthesis; chorismate from D-erythrose 4-phosphate and phosphoenolpyruvate: step 2/7. In terms of biological role, catalyzes the conversion of 3-deoxy-D-arabino-heptulosonate 7-phosphate (DAHP) to dehydroquinate (DHQ). The polypeptide is 3-dehydroquinate synthase (Staphylococcus epidermidis (strain ATCC 35984 / DSM 28319 / BCRC 17069 / CCUG 31568 / BM 3577 / RP62A)).